Here is a 212-residue protein sequence, read N- to C-terminus: MQTAIIDYGMGNLHSVLKSVRTAGQLAGKNVEIFLSGDPERVSRADKVIFPGQGAMPDCMAALTRGGLDEAVKDALKNKPFFGICVGAQLLFDHSEEGNTDGLGWFGGKVRRFERDLLDPQGCRLKVPHMGWNTVRQTQNHPLFQGIPQDTRFYFVHSYYFAPENPETILGESDYPSPFACIVGKDNVFATQFHTEKSHDAGLTMLKNFLNW.

Positions 2 to 212 (QTAIIDYGMG…LTMLKNFLNW (211 aa)) constitute a Glutamine amidotransferase type-1 domain. Cysteine 85 acts as the Nucleophile in catalysis. Catalysis depends on residues histidine 194 and glutamate 196.

As to quaternary structure, heterodimer of HisH and HisF.

It localises to the cytoplasm. It catalyses the reaction 5-[(5-phospho-1-deoxy-D-ribulos-1-ylimino)methylamino]-1-(5-phospho-beta-D-ribosyl)imidazole-4-carboxamide + L-glutamine = D-erythro-1-(imidazol-4-yl)glycerol 3-phosphate + 5-amino-1-(5-phospho-beta-D-ribosyl)imidazole-4-carboxamide + L-glutamate + H(+). The catalysed reaction is L-glutamine + H2O = L-glutamate + NH4(+). It participates in amino-acid biosynthesis; L-histidine biosynthesis; L-histidine from 5-phospho-alpha-D-ribose 1-diphosphate: step 5/9. IGPS catalyzes the conversion of PRFAR and glutamine to IGP, AICAR and glutamate. The HisH subunit catalyzes the hydrolysis of glutamine to glutamate and ammonia as part of the synthesis of IGP and AICAR. The resulting ammonia molecule is channeled to the active site of HisF. This is Imidazole glycerol phosphate synthase subunit HisH (hisH) from Neisseria meningitidis serogroup A / serotype 4A (strain DSM 15465 / Z2491).